The primary structure comprises 349 residues: Ion-translocating oxidoreductase complex subunit D (349 aa).

The next 3 helical transmembrane spans lie at 36–56 (CAFF…VALS), 77–99 (SAML…WMIV), and 124–144 (AMAA…SWIA). Position 185 is an FMN phosphoryl threonine (T185). 5 helical membrane-spanning segments follow: residues 212–232 (GTGV…LVLL), 239–259 (WHIS…GFLL), 265–285 (ASPL…FIAT), 291–311 (ATSP…VYVI), and 315–335 (GGYP…APFI).

It belongs to the NqrB/RnfD family. As to quaternary structure, the complex is composed of six subunits: RnfA, RnfB, RnfC, RnfD, RnfE and RnfG. FMN is required as a cofactor.

It is found in the cell inner membrane. Part of a membrane-bound complex that couples electron transfer with translocation of ions across the membrane. This chain is Ion-translocating oxidoreductase complex subunit D, found in Shewanella sp. (strain MR-4).